A 341-amino-acid chain; its full sequence is N-acetyl-gamma-glutamyl-phosphate reductase (341 aa).

C147 is an active-site residue.

The protein belongs to the NAGSA dehydrogenase family. Type 1 subfamily.

The protein localises to the cytoplasm. The enzyme catalyses N-acetyl-L-glutamate 5-semialdehyde + phosphate + NADP(+) = N-acetyl-L-glutamyl 5-phosphate + NADPH + H(+). Its pathway is amino-acid biosynthesis; L-arginine biosynthesis; N(2)-acetyl-L-ornithine from L-glutamate: step 3/4. Functionally, catalyzes the NADPH-dependent reduction of N-acetyl-5-glutamyl phosphate to yield N-acetyl-L-glutamate 5-semialdehyde. The polypeptide is N-acetyl-gamma-glutamyl-phosphate reductase (Dehalococcoides mccartyi (strain CBDB1)).